The chain runs to 242 residues: Carboxy-S-adenosyl-L-methionine synthase (242 aa).

S-adenosyl-L-methionine is bound by residues Y39, 64-66 (GCS), 89-90 (DN), 117-118 (DI), N132, and R199.

The protein belongs to the class I-like SAM-binding methyltransferase superfamily. Cx-SAM synthase family. As to quaternary structure, homodimer.

It carries out the reaction prephenate + S-adenosyl-L-methionine = carboxy-S-adenosyl-L-methionine + 3-phenylpyruvate + H2O. Functionally, catalyzes the conversion of S-adenosyl-L-methionine (SAM) to carboxy-S-adenosyl-L-methionine (Cx-SAM). The polypeptide is Carboxy-S-adenosyl-L-methionine synthase (Vibrio atlanticus (strain LGP32) (Vibrio splendidus (strain Mel32))).